The sequence spans 1462 residues: Iron-sulfur cluster assembly protein SufD (1462 aa).

Disordered stretches follow at residues 500-525 (IDNNQNDDIDNNNNNNNNNNNCDNPY), 938-970 (NQNKENENENENNSQSDNNTTKQHIQDEQGTEQ), and 1111-1153 (NIPS…EKEE). Low complexity predominate over residues 510 to 523 (NNNNNNNNNNNCDN). The span at 961–970 (HIQDEQGTEQ) shows a compositional bias: basic and acidic residues. Residues 1111–1136 (NIPSNNKQTNSNNNSEYNNEQNNCSN) are compositionally biased toward low complexity.

Belongs to the iron-sulfur cluster assembly SufBD family. As to quaternary structure, component of a complex composed of SufB, SufC and SufD in a stoichiometric ratio of 1:2:1. Interacts with SufB. Interacts with SufC; the interaction enhances the ATPase activity of SufC. Post-translationally, proteolytically cleaved.

Its subcellular location is the plastid. The protein localises to the apicoplast. It functions in the pathway cofactor biosynthesis; iron-sulfur cluster biosynthesis. Its function is as follows. Participates in the sulfur mobilization (SUF) pathway for iron-sulfur (Fe-S) cluster biogenesis. As part of a complex consisting of SufB-SufC(2)-SufD, involved in assembly of [4Fe-4S] clusters. Enhances the ATPase activity of SufC. The protein is Iron-sulfur cluster assembly protein SufD of Plasmodium falciparum (isolate 3D7).